A 101-amino-acid chain; its full sequence is Protein translation factor SUI1 homolog (101 aa).

Belongs to the SUI1 family.

The chain is Protein translation factor SUI1 homolog from Methanothermobacter thermautotrophicus (strain ATCC 29096 / DSM 1053 / JCM 10044 / NBRC 100330 / Delta H) (Methanobacterium thermoautotrophicum).